The sequence spans 326 residues: Biotin synthase (326 aa).

The Radical SAM core domain occupies 51-278 (NEVQRSTLLS…TSYVRLSAGR (228 aa)). Residues C66, C70, and C73 each coordinate [4Fe-4S] cluster. C110, C141, C201, and R273 together coordinate [2Fe-2S] cluster.

The protein belongs to the radical SAM superfamily. Biotin synthase family. As to quaternary structure, homodimer. The cofactor is [4Fe-4S] cluster. [2Fe-2S] cluster is required as a cofactor.

It carries out the reaction (4R,5S)-dethiobiotin + (sulfur carrier)-SH + 2 reduced [2Fe-2S]-[ferredoxin] + 2 S-adenosyl-L-methionine = (sulfur carrier)-H + biotin + 2 5'-deoxyadenosine + 2 L-methionine + 2 oxidized [2Fe-2S]-[ferredoxin]. It functions in the pathway cofactor biosynthesis; biotin biosynthesis; biotin from 7,8-diaminononanoate: step 2/2. Catalyzes the conversion of dethiobiotin (DTB) to biotin by the insertion of a sulfur atom into dethiobiotin via a radical-based mechanism. This chain is Biotin synthase, found in Azoarcus sp. (strain BH72).